The following is a 70-amino-acid chain: Beta-defensin 43 (70 aa).

A signal peptide spans 1–22 (MRLLLSILGVLTLLSILPLARS). 2 disulfide bridges follow: cysteine 29–cysteine 57 and cysteine 36–cysteine 50.

The protein belongs to the beta-defensin family.

The protein resides in the secreted. In terms of biological role, has bactericidal activity. In Rattus norvegicus (Rat), this protein is Beta-defensin 43 (Defb43).